The sequence spans 196 residues: Imidazoleglycerol-phosphate dehydratase (196 aa).

The protein belongs to the imidazoleglycerol-phosphate dehydratase family.

Its subcellular location is the cytoplasm. The catalysed reaction is D-erythro-1-(imidazol-4-yl)glycerol 3-phosphate = 3-(imidazol-4-yl)-2-oxopropyl phosphate + H2O. The protein operates within amino-acid biosynthesis; L-histidine biosynthesis; L-histidine from 5-phospho-alpha-D-ribose 1-diphosphate: step 6/9. The chain is Imidazoleglycerol-phosphate dehydratase from Acidiphilium cryptum (strain JF-5).